Here is a 174-residue protein sequence, read N- to C-terminus: Superoxide dismutase [Cu-Zn] (174 aa).

A signal peptide spans 1-23 (MIRLSAAAALGLAAALAASPALA). His68, His70, and His86 together coordinate Cu cation. Cys75 and Cys170 are oxidised to a cystine. Zn(2+)-binding residues include His86, His95, Asp104, and Asp107. His150 is a binding site for Cu cation.

It belongs to the Cu-Zn superoxide dismutase family. Homodimer. The cofactor is Cu cation. Zn(2+) is required as a cofactor.

The protein resides in the periplasm. The enzyme catalyses 2 superoxide + 2 H(+) = H2O2 + O2. In terms of biological role, destroys radicals which are normally produced within the cells and which are toxic to biological systems. May function against extracytoplasmic toxic oxygen species. This Caulobacter vibrioides (strain ATCC 19089 / CIP 103742 / CB 15) (Caulobacter crescentus) protein is Superoxide dismutase [Cu-Zn] (sodC).